The chain runs to 239 residues: Large ribosomal subunit protein uL1 (239 aa).

Belongs to the universal ribosomal protein uL1 family. As to quaternary structure, part of the 50S ribosomal subunit.

Functionally, binds directly to 23S rRNA. The L1 stalk is quite mobile in the ribosome, and is involved in E site tRNA release. Its function is as follows. Protein L1 is also a translational repressor protein, it controls the translation of the L11 operon by binding to its mRNA. This Rickettsia africae (strain ESF-5) protein is Large ribosomal subunit protein uL1.